Consider the following 338-residue polypeptide: Phenylalanine--tRNA ligase alpha subunit (338 aa).

Glutamate 253 provides a ligand contact to Mg(2+).

This sequence belongs to the class-II aminoacyl-tRNA synthetase family. Phe-tRNA synthetase alpha subunit type 1 subfamily. In terms of assembly, tetramer of two alpha and two beta subunits. It depends on Mg(2+) as a cofactor.

The protein localises to the cytoplasm. It carries out the reaction tRNA(Phe) + L-phenylalanine + ATP = L-phenylalanyl-tRNA(Phe) + AMP + diphosphate + H(+). In Legionella pneumophila (strain Paris), this protein is Phenylalanine--tRNA ligase alpha subunit.